The sequence spans 267 residues: MKQNRIASLVEQDKKLLVAYYMPEYPVAGATLPVLEALQENGADIIELGIPFSDPVGDGPVIQEAAQRAIRNGVTVKNLLETVHNARRGAGCKAITVPIILMGYCNPLIAYGGDCFLNDAVEAGVDGLLLPDLPPEEAEDFLERAKSFGLTVVFLISPVTPPDRIEMIDSLSTDFSYCLAVNATTGTAKLAGEDADAAIEEYLKRVRQHTRKKFVVGFGIRDKARVMQMWKLADGAVVGTALLQRLAAAHTPGETARLAGEFWQALR.

Active-site proton acceptor residues include E47 and D58.

It belongs to the TrpA family. In terms of assembly, tetramer of two alpha and two beta chains.

The enzyme catalyses (1S,2R)-1-C-(indol-3-yl)glycerol 3-phosphate + L-serine = D-glyceraldehyde 3-phosphate + L-tryptophan + H2O. It functions in the pathway amino-acid biosynthesis; L-tryptophan biosynthesis; L-tryptophan from chorismate: step 5/5. The alpha subunit is responsible for the aldol cleavage of indoleglycerol phosphate to indole and glyceraldehyde 3-phosphate. This Chlorobium limicola (strain DSM 245 / NBRC 103803 / 6330) protein is Tryptophan synthase alpha chain.